Reading from the N-terminus, the 397-residue chain is Elongation factor Tu (397 aa).

In terms of domain architecture, tr-type G spans 10-207 (KPHCNIGTIG…AVDEWIPQPE (198 aa)). Residues 19-26 (GHVDHGKT) form a G1 region. Position 19–26 (19–26 (GHVDHGKT)) interacts with GTP. Thr-26 is a binding site for Mg(2+). Residues 61–65 (GITIS) are G2. The tract at residues 82 to 85 (DCPG) is G3. Residues 82–86 (DCPGH) and 137–140 (NKVD) each bind GTP. Positions 137–140 (NKVD) are G4. A G5 region spans residues 175-177 (SAL).

It belongs to the TRAFAC class translation factor GTPase superfamily. Classic translation factor GTPase family. EF-Tu/EF-1A subfamily. In terms of assembly, monomer.

Its subcellular location is the cytoplasm. The enzyme catalyses GTP + H2O = GDP + phosphate + H(+). In terms of biological role, GTP hydrolase that promotes the GTP-dependent binding of aminoacyl-tRNA to the A-site of ribosomes during protein biosynthesis. The chain is Elongation factor Tu from Sphingopyxis alaskensis (strain DSM 13593 / LMG 18877 / RB2256) (Sphingomonas alaskensis).